A 201-amino-acid chain; its full sequence is UPF0323 lipoprotein Cj0371 (201 aa).

A signal peptide spans methionine 1–glycine 26. Cysteine 27 is lipidated: N-palmitoyl cysteine. Residue cysteine 27 is the site of S-diacylglycerol cysteine attachment. Positions asparagine 169–serine 201 are disordered. Composition is skewed to low complexity over residues lysine 170 to glycine 184 and lysine 191 to serine 201.

The protein belongs to the UPF0323 family.

The protein localises to the cell membrane. The sequence is that of UPF0323 lipoprotein Cj0371 from Campylobacter jejuni subsp. jejuni serotype O:2 (strain ATCC 700819 / NCTC 11168).